The following is a 119-amino-acid chain: Putative mating-type protein A2 (119 aa).

Positions 38–100 form a DNA-binding region, homeobox; TALE-type; that stretch reads KPYRGHRFTK…NRRRKEKTIT (63 aa).

The protein belongs to the TALE/M-ATYP homeobox family.

The protein resides in the nucleus. Functionally, probably not a functional protein. Cells lacking A2 show no obvious alterations in mating, sporulation and cell growth. The polypeptide is Putative mating-type protein A2 (MATA2) (Saccharomyces cerevisiae (Baker's yeast)).